The primary structure comprises 382 residues: Flap endonuclease 1-A (382 aa).

An N-domain region spans residues 1 to 104 (MGIHGLAKLI…GELAKRSERR (104 aa)). Residue Asp-34 participates in Mg(2+) binding. DNA-binding residues include Arg-47 and Arg-70. Residues Asp-86, Glu-158, Glu-160, Asp-179, and Asp-181 each coordinate Mg(2+). The interval 122–253 (NIEKFTKRLV…KRAIDLIRQH (132 aa)) is I-domain. Residue Glu-158 coordinates DNA. 2 residues coordinate DNA: Gly-231 and Asp-233. Asp-233 provides a ligand contact to Mg(2+). Positions 336–344 (TQGRLDDFF) are interaction with PCNA. Residues 350 to 382 (VSSTKRKEAESKGSAKKKAKTGGTPAGKFKRGK) are disordered.

This sequence belongs to the XPG/RAD2 endonuclease family. FEN1 subfamily. In terms of assembly, interacts with PCNA. Three molecules of fen1 bind to one PCNA trimer with each molecule binding to one PCNA monomer. PCNA stimulates the nuclease activity without altering cleavage specificity. Requires Mg(2+) as cofactor. In terms of processing, phosphorylated. Phosphorylation upon DNA damage induces relocalization to the nuclear plasma.

The protein localises to the nucleus. It localises to the nucleolus. It is found in the nucleoplasm. The protein resides in the mitochondrion. Structure-specific nuclease with 5'-flap endonuclease and 5'-3' exonuclease activities involved in DNA replication and repair. During DNA replication, cleaves the 5'-overhanging flap structure that is generated by displacement synthesis when DNA polymerase encounters the 5'-end of a downstream Okazaki fragment. It enters the flap from the 5'-end and then tracks to cleave the flap base, leaving a nick for ligation. Also involved in the long patch base excision repair (LP-BER) pathway, by cleaving within the apurinic/apyrimidinic (AP) site-terminated flap. Acts as a genome stabilization factor that prevents flaps from equilibrating into structures that lead to duplications and deletions. Also possesses 5'-3' exonuclease activity on nicked or gapped double-stranded DNA, and exhibits RNase H activity. Also involved in replication and repair of rDNA and in repairing mitochondrial DNA. The protein is Flap endonuclease 1-A (fen1-a) of Xenopus laevis (African clawed frog).